Reading from the N-terminus, the 408-residue chain is Neutral cholesterol ester hydrolase 1 (408 aa).

Topologically, residues 1 to 4 (MRSS) are cytoplasmic. Residues 5–25 (CVLLAALLALVAYYVYIPLPS) form a helical; Signal-anchor for type II membrane protein membrane-spanning segment. Topologically, residues 26–408 (AVSDPWKLML…SYFKWLDQNL (383 aa)) are lumenal. Positions 113-115 (HGG) match the Involved in the stabilization of the negatively charged intermediate by the formation of the oxyanion hole motif. Ser-191 is a catalytic residue. N-linked (GlcNAc...) asparagine glycosylation occurs at Asn-270. Asp-348 is an active-site residue. N-linked (GlcNAc...) asparagine glycosylation occurs at Asn-367. Residue His-378 is part of the active site. N-linked (GlcNAc...) asparagine glycosylation is present at Asn-389.

The protein belongs to the 'GDXG' lipolytic enzyme family. In terms of processing, N-glycosylated.

It is found in the cell membrane. Its subcellular location is the microsome. The enzyme catalyses a 1-O-alkyl-2-acetyl-sn-glycerol + H2O = a 1-O-alkyl-sn-glycerol + acetate + H(+). It catalyses the reaction 1-O-hexadecyl-2-acetyl-sn-glycerol + H2O = 1-O-hexadecyl-sn-glycerol + acetate + H(+). The catalysed reaction is a cholesterol ester + H2O = cholesterol + a fatty acid + H(+). It carries out the reaction cholesteryl (9Z-octadecenoate) + H2O = cholesterol + (9Z)-octadecenoate + H(+). Hydrolyzes 2-acetyl monoalkylglycerol ether (1-O-alkyl-2-acetyl-sn-glycerol), the penultimate precursor of the pathway for de novo synthesis of platelet-activating factor. May be responsible for the hydrolysis of cholesterol esters (such as cholesteryl (9Z-octadecenoate)) in macrophages. Also involved in organ detoxification by hydrolyzing exogenous organophosphorus compounds. In Rattus norvegicus (Rat), this protein is Neutral cholesterol ester hydrolase 1 (Nceh1).